We begin with the raw amino-acid sequence, 180 residues long: Probable nicotinate-nucleotide adenylyltransferase (180 aa).

It belongs to the NadD family.

It catalyses the reaction nicotinate beta-D-ribonucleotide + ATP + H(+) = deamido-NAD(+) + diphosphate. Its pathway is cofactor biosynthesis; NAD(+) biosynthesis; deamido-NAD(+) from nicotinate D-ribonucleotide: step 1/1. Its function is as follows. Catalyzes the reversible adenylation of nicotinate mononucleotide (NaMN) to nicotinic acid adenine dinucleotide (NaAD). This is Probable nicotinate-nucleotide adenylyltransferase from Pelagibacter ubique (strain HTCC1062).